Here is a 256-residue protein sequence, read N- to C-terminus: Protein FixA (256 aa).

The protein belongs to the ETF beta-subunit/FixA family. As to quaternary structure, heterodimer of FixA and FixB.

It functions in the pathway amine and polyamine metabolism; carnitine metabolism. Required for anaerobic carnitine reduction. May bring reductant to CaiA. This Salmonella dublin (strain CT_02021853) protein is Protein FixA.